Reading from the N-terminus, the 313-residue chain is Olfactory receptor 1f45 (313 aa).

The Extracellular segment spans residues 1-25; it reads MSSTNQSSVTEFLLLGLSRQPQQQQ. Residue Asn5 is glycosylated (N-linked (GlcNAc...) asparagine). A helical membrane pass occupies residues 26–50; the sequence is LLFLLFLIMYLATVLGNLLIILAIG. Residues 51-57 lie on the Cytoplasmic side of the membrane; sequence TDSRLHT. Residues 58 to 79 traverse the membrane as a helical segment; that stretch reads PMYFFLSNLSFVDVCFSSTTVP. Residues 80 to 100 lie on the Extracellular side of the membrane; that stretch reads KVLANHILGSQAISFSGCLTQ. Cys97 and Cys189 are oxidised to a cystine. Residues 101 to 120 traverse the membrane as a helical segment; sequence LYFLAVFGNMDNFLLAVMSY. Over 121 to 139 the chain is Cytoplasmic; the sequence is DRFVAICHPLHYTTKMTRQ. The helical transmembrane segment at 140–158 threads the bilayer; the sequence is LCVLLVVGSWVVANMNCLL. Residues 159–196 lie on the Extracellular side of the membrane; it reads HILLMARLSFCADNMIPHFFCDGTPLLKLSCSDTHLNE. A helical membrane pass occupies residues 197-219; it reads LMILTEGAVVMVTPFVCILISYI. At 220–236 the chain is on the cytoplasmic side; sequence HITCAVLRVSSPRGGWK. Residues 237 to 260 traverse the membrane as a helical segment; that stretch reads SFSTCGSHLAVVCLFYGTVIAVYF. Over 261-272 the chain is Extracellular; the sequence is NPSSSHLAGRDM. The helical transmembrane segment at 273 to 292 threads the bilayer; that stretch reads AAAVMYAVVTPMLNPFIYSL. At 293–313 the chain is on the cytoplasmic side; it reads RNSDMKAALRKVLAMRFPSKQ.

The protein belongs to the G-protein coupled receptor 1 family. As to expression, olfactory epithelium.

The protein resides in the cell membrane. Functionally, odorant receptor. This Rattus norvegicus (Rat) protein is Olfactory receptor 1f45 (Or1f45).